The primary structure comprises 420 residues: 2,3-dimethylmalate dehydratase large subunit (420 aa).

Positions 301, 361, and 364 each coordinate [4Fe-4S] cluster.

It belongs to the aconitase/IPM isomerase family. LeuC type 2 subfamily. Heterodimer of a large and a small subunit. [4Fe-4S] cluster is required as a cofactor.

The enzyme catalyses (2R,3S)-2,3-dimethylmalate = dimethylmaleate + H2O. Its pathway is cofactor degradation; nicotinate degradation; propanoate and pyruvate from 6-hydroxynicotinate: step 7/8. The polypeptide is 2,3-dimethylmalate dehydratase large subunit (dmdA) (Eubacterium barkeri (Clostridium barkeri)).